The primary structure comprises 166 residues: Disulfide bond formation protein B (166 aa).

Over Met1–Gly11 the chain is Cytoplasmic. Residues Tyr12 to Phe28 traverse the membrane as a helical segment. Residues Leu29 to Ile46 are Periplasmic-facing. Cys38 and Cys41 form a disulfide bridge. A helical transmembrane segment spans residues Ala47–Pro63. Residues Gly64–Lys69 are Cytoplasmic-facing. The helical transmembrane segment at Val70 to Ala87 threads the bilayer. At Arg88–Gln144 the chain is on the periplasmic side. Cysteines 103 and 130 form a disulfide. A helical membrane pass occupies residues Leu145–His163. Topologically, residues Lys164–Ala166 are cytoplasmic.

It belongs to the DsbB family.

Its subcellular location is the cell inner membrane. Its function is as follows. Required for disulfide bond formation in some periplasmic proteins. Acts by oxidizing the DsbA protein. In Methylobacillus flagellatus (strain ATCC 51484 / DSM 6875 / VKM B-1610 / KT), this protein is Disulfide bond formation protein B.